The sequence spans 348 residues: Protein RecA (348 aa).

Gly-65–Thr-72 contacts ATP.

This sequence belongs to the RecA family.

Its subcellular location is the cytoplasm. In terms of biological role, can catalyze the hydrolysis of ATP in the presence of single-stranded DNA, the ATP-dependent uptake of single-stranded DNA by duplex DNA, and the ATP-dependent hybridization of homologous single-stranded DNAs. It interacts with LexA causing its activation and leading to its autocatalytic cleavage. The chain is Protein RecA from Saccharophagus degradans (strain 2-40 / ATCC 43961 / DSM 17024).